The following is a 257-amino-acid chain: Imidazole glycerol phosphate synthase subunit HisF (257 aa).

Residues aspartate 12 and aspartate 131 contribute to the active site.

This sequence belongs to the HisA/HisF family. Heterodimer of HisH and HisF.

It localises to the cytoplasm. It carries out the reaction 5-[(5-phospho-1-deoxy-D-ribulos-1-ylimino)methylamino]-1-(5-phospho-beta-D-ribosyl)imidazole-4-carboxamide + L-glutamine = D-erythro-1-(imidazol-4-yl)glycerol 3-phosphate + 5-amino-1-(5-phospho-beta-D-ribosyl)imidazole-4-carboxamide + L-glutamate + H(+). It participates in amino-acid biosynthesis; L-histidine biosynthesis; L-histidine from 5-phospho-alpha-D-ribose 1-diphosphate: step 5/9. In terms of biological role, IGPS catalyzes the conversion of PRFAR and glutamine to IGP, AICAR and glutamate. The HisF subunit catalyzes the cyclization activity that produces IGP and AICAR from PRFAR using the ammonia provided by the HisH subunit. This Burkholderia thailandensis (strain ATCC 700388 / DSM 13276 / CCUG 48851 / CIP 106301 / E264) protein is Imidazole glycerol phosphate synthase subunit HisF.